Reading from the N-terminus, the 95-residue chain is Large ribosomal subunit protein eL37x (95 aa).

Zn(2+)-binding residues include C19, C22, C34, and C37. The C4-type zinc-finger motif lies at 19-37; sequence CVRCGRRSFHIQKSRCSAC. The tract at residues 73–95 is disordered; the sequence is RFKTGFREGTEAKPRSKASASSA. A compositionally biased stretch (basic and acidic residues) spans 77 to 86; the sequence is GFREGTEAKP.

It belongs to the eukaryotic ribosomal protein eL37 family. Requires Zn(2+) as cofactor.

Binds to the 23S rRNA. In Arabidopsis thaliana (Mouse-ear cress), this protein is Large ribosomal subunit protein eL37x (RPL37C).